A 252-amino-acid polypeptide reads, in one-letter code: Pre-rRNA-processing protein pno1 (252 aa).

Residues 1–57 (MPAPTALLRKSDEPLSAEEPSLTFSSDAQASGQGEAPSPIPTESAQHSDMRIDEESR) are disordered. Over residues 22–32 (LTFSSDAQASG) the composition is skewed to polar residues. The segment covering 46–57 (QHSDMRIDEESR) has biased composition (basic and acidic residues). The KH domain maps to 173–225 (GEHLSRAIGRIAGKDGKTKFAIENASRTRVVLQGTKVTILGRFRDLGIAQEAI).

The protein belongs to the PNO1 family. Component of the small ribosomal subunit, ribosomal RNA processing complex (SSU RRP complex).

Its subcellular location is the cytoplasm. It is found in the nucleus. The protein resides in the nucleolus. In terms of biological role, required for small ribosomal subunit (SSU) synthesis. Has a role in the processing of early nucleolar and late cytoplasmic pre-RNA species. The protein is Pre-rRNA-processing protein pno1 (pno1) of Aspergillus fumigatus (strain ATCC MYA-4609 / CBS 101355 / FGSC A1100 / Af293) (Neosartorya fumigata).